The following is a 145-amino-acid chain: Large ribosomal subunit protein uL15 (145 aa).

Composition is skewed to basic residues over residues 1–13 and 19–29; these read MVRE…RGGH and KAGRGKGKKGG. The disordered stretch occupies residues 1-33; it reads MVRERTKKLRGGHYGRGMKAGRGKGKKGGRGNA.

It belongs to the universal ribosomal protein uL15 family. In terms of assembly, part of the 50S ribosomal subunit.

Its function is as follows. Binds to the 23S rRNA. The protein is Large ribosomal subunit protein uL15 of Thermoplasma volcanium (strain ATCC 51530 / DSM 4299 / JCM 9571 / NBRC 15438 / GSS1).